Reading from the N-terminus, the 488-residue chain is Multidrug resistance outer membrane protein MdtP (488 aa).

Residues 1–23 (MINRQLSRLLLCSILGSTTLISG) form the signal peptide. Cys24 is lipidated: N-palmitoyl cysteine. Cys24 carries the S-diacylglycerol cysteine lipid modification.

This sequence belongs to the outer membrane factor (OMF) (TC 1.B.17) family. As to quaternary structure, could be part of a tripartite efflux system composed of MdtN, MdtO and MdtP.

The protein resides in the cell outer membrane. Functionally, could be involved in resistance to puromycin, acriflavine and tetraphenylarsonium chloride. The chain is Multidrug resistance outer membrane protein MdtP (mdtP) from Escherichia coli O6:H1 (strain CFT073 / ATCC 700928 / UPEC).